A 259-amino-acid polypeptide reads, in one-letter code: Phosphate import ATP-binding protein PstB 1 (259 aa).

Residues 13 to 254 (IQVRGLEFFY…PSKTQTEDYI (242 aa)) enclose the ABC transporter domain. Position 45–52 (45–52 (GPSGCGKS)) interacts with ATP.

Belongs to the ABC transporter superfamily. Phosphate importer (TC 3.A.1.7) family. In terms of assembly, the complex is composed of two ATP-binding proteins (PstB), two transmembrane proteins (PstC and PstA) and a solute-binding protein (PstS).

Its subcellular location is the cell inner membrane. It catalyses the reaction phosphate(out) + ATP + H2O = ADP + 2 phosphate(in) + H(+). Part of the ABC transporter complex PstSACB involved in phosphate import. Responsible for energy coupling to the transport system. This Pseudomonas syringae pv. tomato (strain ATCC BAA-871 / DC3000) protein is Phosphate import ATP-binding protein PstB 1.